The following is a 465-amino-acid chain: Phosphatidate cytidylyltransferase (465 aa).

Residues Met-1 to Glu-60 are disordered. Residues Ala-10 to Ser-38 show a composition bias toward basic and acidic residues. Residues Asp-39 to Asp-53 show a composition bias toward acidic residues. 8 consecutive transmembrane segments (helical) span residues Trp-95–Ala-117, Met-121–Tyr-143, Phe-158–Val-178, Phe-187–Phe-207, Gly-214–Val-234, Phe-239–Ile-259, Gly-288–Tyr-308, and Ile-367–Phe-387.

This sequence belongs to the CDS family.

Its subcellular location is the membrane. It carries out the reaction a 1,2-diacyl-sn-glycero-3-phosphate + CTP + H(+) = a CDP-1,2-diacyl-sn-glycerol + diphosphate. The protein operates within phospholipid metabolism; CDP-diacylglycerol biosynthesis; CDP-diacylglycerol from sn-glycerol 3-phosphate: step 3/3. Its function is as follows. Provides CDP-diacylglycerol, an important precursor for the synthesis of phosphatidylinositol (PtdIns). This chain is Phosphatidate cytidylyltransferase (cdgs-1), found in Caenorhabditis elegans.